Consider the following 396-residue polypeptide: MAPVKQKKKNKKKPLDKAKKLAKNKEKKRVNAVPLDPEAIDCDWWDTFWLRNSSPSVPSDEDYAFKHFFRASKTTFSYICSLVREDLISRPPSGLINIEGRLLSVEKQVAIALRRLASGDSQVSVGAAFGVGQSTVSQVTWRFIEALEERAKHHLRWPDSDRIEEIKSKFEEMYGLPNCCGAIDTTHIIMTLPAVQASDDWCDQEKNYSMFLQGVFDHEMRFLNMVTGWPGGMTVSKLLKFSGFFKLCENAQILDGNPKTLSQGAQIREYVVGGISYPLLPWLITPHDSDHPSDSMVAFNERHEKVRSVAATAFQQLKGSWRILSKVMWRPDRRKLPSIILVCCLLHNIIIDCGDYLQEDVPLSGHHDSGYADRYCKQTEPLGSELRGCLTEHLLR.

2 stretches are compositionally biased toward basic residues: residues 1 to 12 (MAPVKQKKKNKK) and 20 to 29 (KLAKNKEKKR). The tract at residues 1–29 (MAPVKQKKKNKKKPLDKAKKLAKNKEKKR) is disordered. The Nuclear localization signal signature appears at 6–13 (QKKKNKKK). One can recognise a DDE Tnp4 domain in the interval 183–348 (IDTTHIIMTL…IILVCCLLHN (166 aa)).

The protein belongs to the HARBI1 family. As to quaternary structure, interacts with core components of POLYCOMB REPRESSIVE COMPLEX 2 (PRC2), a PcG protein complex with H3K27me3 histone methyltransferase activity. Associates with plant-specific PRC2 accessory components such as MSI1, EMF2, VRN2, FIE and CLF. A divalent metal cation serves as cofactor. In terms of tissue distribution, expressed in roots, inflorescence stems, seedlings, leaves, flower buds, inflorescences, and siliques.

Its subcellular location is the nucleus. In terms of biological role, transposase-derived protein that may have nuclease activity. Antagonist of polycomb-group (PcG) protein-mediated chromatin silencing, probably by preventing the association of POLYCOMB REPRESSIVE COMPLEX 2 (PRC2) with its accessory components. Needed for full reactivation of several floral homeotic genes that are repressed by PcG. This Arabidopsis thaliana (Mouse-ear cress) protein is Protein ANTAGONIST OF LIKE HETEROCHROMATIN PROTEIN 1.